Reading from the N-terminus, the 185-residue chain is dTTP/UTP pyrophosphatase (185 aa).

Asp-64 functions as the Proton acceptor in the catalytic mechanism.

This sequence belongs to the Maf family. YhdE subfamily. Requires a divalent metal cation as cofactor.

The protein localises to the cytoplasm. The catalysed reaction is dTTP + H2O = dTMP + diphosphate + H(+). The enzyme catalyses UTP + H2O = UMP + diphosphate + H(+). In terms of biological role, nucleoside triphosphate pyrophosphatase that hydrolyzes dTTP and UTP. May have a dual role in cell division arrest and in preventing the incorporation of modified nucleotides into cellular nucleic acids. The chain is dTTP/UTP pyrophosphatase from Thermococcus gammatolerans (strain DSM 15229 / JCM 11827 / EJ3).